Consider the following 303-residue polypeptide: ATP phosphoribosyltransferase (303 aa).

Belongs to the ATP phosphoribosyltransferase family. Long subfamily. Requires Mg(2+) as cofactor.

It localises to the cytoplasm. The enzyme catalyses 1-(5-phospho-beta-D-ribosyl)-ATP + diphosphate = 5-phospho-alpha-D-ribose 1-diphosphate + ATP. The protein operates within amino-acid biosynthesis; L-histidine biosynthesis; L-histidine from 5-phospho-alpha-D-ribose 1-diphosphate: step 1/9. Its activity is regulated as follows. Feedback inhibited by histidine. Catalyzes the condensation of ATP and 5-phosphoribose 1-diphosphate to form N'-(5'-phosphoribosyl)-ATP (PR-ATP). Has a crucial role in the pathway because the rate of histidine biosynthesis seems to be controlled primarily by regulation of HisG enzymatic activity. The chain is ATP phosphoribosyltransferase from Haemophilus influenzae (strain PittGG).